We begin with the raw amino-acid sequence, 396 residues long: MSIRIKLKPGREKSLDRRHPWVFSSGVHNIKGKPLRGETVDVVAHDGRWLGRGAWSDASQIQVRVWTFDKEEAIDRDFFARRIARAQAGREALIREKGLTGYRLVGAESDGLPGITIDRYANVLVCQLLSAGADYWRETLVSVLAEQFPECAIYERSDVDSRKKEGLPLVTGLLHGELPAMPLIIEENGIKIAVDVEKGHKTGFYLDQRDNRAMAGRFVEGKSVLNCFCYTGTFGLYAAKAGAASIENVDVSTLALDTARHNMAINGLNDDHVTYSEADVFKLLRQYRDEGKTFDVIVLDPPKFADNKAQLNGACRGYKDINMIAMQLLKPGGTLLTFSCSGLMPADLFQKIVADAALDAGRDAQFIERLSQASDHPIGAAFPEGFYLKGLVARVW.

The region spanning 2–79 (SIRIKLKPGR…KEEAIDRDFF (78 aa)) is the PUA domain.

Belongs to the methyltransferase superfamily. RlmI family.

It localises to the cytoplasm. It carries out the reaction cytidine(1962) in 23S rRNA + S-adenosyl-L-methionine = 5-methylcytidine(1962) in 23S rRNA + S-adenosyl-L-homocysteine + H(+). In terms of biological role, specifically methylates the cytosine at position 1962 (m5C1962) of 23S rRNA. The protein is Ribosomal RNA large subunit methyltransferase I of Shewanella amazonensis (strain ATCC BAA-1098 / SB2B).